A 554-amino-acid chain; its full sequence is 3-(3-hydroxy-phenyl)propionate/3-hydroxycinnamic acid hydroxylase (554 aa).

FAD contacts are provided by residues 17-46 (QVAI…VVEK) and 285-295 (FRIDRVLLAGD).

Belongs to the PheA/TfdB FAD monooxygenase family. FAD is required as a cofactor.

It catalyses the reaction 3-(3-hydroxyphenyl)propanoate + NADH + O2 + H(+) = 3-(2,3-dihydroxyphenyl)propanoate + NAD(+) + H2O. The catalysed reaction is (2E)-3-(3-hydroxyphenyl)prop-2-enoate + NADH + O2 + H(+) = (2E)-3-(2,3-dihydroxyphenyl)prop-2-enoate + NAD(+) + H2O. It functions in the pathway aromatic compound metabolism; 3-phenylpropanoate degradation. Catalyzes the insertion of one atom of molecular oxygen into position 2 of the phenyl ring of 3-(3-hydroxyphenyl)propionate (3-HPP) and hydroxycinnamic acid (3HCI). The polypeptide is 3-(3-hydroxy-phenyl)propionate/3-hydroxycinnamic acid hydroxylase (Escherichia coli (strain 55989 / EAEC)).